The following is a 40-amino-acid chain: Large ribosomal subunit protein bL36 (40 aa).

It belongs to the bacterial ribosomal protein bL36 family.

The chain is Large ribosomal subunit protein bL36 from Corynebacterium jeikeium (strain K411).